Here is a 227-residue protein sequence, read N- to C-terminus: Urease accessory protein UreF (227 aa).

This sequence belongs to the UreF family. As to quaternary structure, ureD, UreF and UreG form a complex that acts as a GTP-hydrolysis-dependent molecular chaperone, activating the urease apoprotein by helping to assemble the nickel containing metallocenter of UreC. The UreE protein probably delivers the nickel.

The protein localises to the cytoplasm. Its function is as follows. Required for maturation of urease via the functional incorporation of the urease nickel metallocenter. This chain is Urease accessory protein UreF, found in Shewanella halifaxensis (strain HAW-EB4).